The primary structure comprises 188 residues: dCTP deaminase (188 aa).

DCTP-binding positions include 111–116 (KSTYAR), 135–137 (TLE), Q156, Y170, and Q180. E137 serves as the catalytic Proton donor/acceptor.

This sequence belongs to the dCTP deaminase family. In terms of assembly, homotrimer.

It carries out the reaction dCTP + H2O + H(+) = dUTP + NH4(+). It participates in pyrimidine metabolism; dUMP biosynthesis; dUMP from dCTP (dUTP route): step 1/2. Functionally, catalyzes the deamination of dCTP to dUTP. This Pseudomonas putida (strain GB-1) protein is dCTP deaminase.